Here is a 2210-residue protein sequence, read N- to C-terminus: Orsellinic acid synthase ArmB (2210 aa).

The tract at residues 38–261 (LLLDACHYAF…HKTTVDALYH (224 aa)) is N-terminal acylcarrier protein transacylase domain (SAT). The Ketosynthase family 3 (KS3) domain occupies 391–817 (QEPIAICGMS…GSNGALLLEE (427 aa)). Active-site for beta-ketoacyl synthase activity residues include cysteine 561, histidine 696, and histidine 736. The tract at residues 915–1240 (VFVFSGQGGQ…GLTLSSSLSQ (326 aa)) is malonyl-CoA:ACP transacylase (MAT) domain. Serine 1009 functions as the For acyl/malonyl transferase activity in the catalytic mechanism. The segment at 1307–1437 (MLQSWAQFPS…GQFRPLLVVD (131 aa)) is N-terminal hotdog fold. Residues 1307–1614 (MLQSWAQFPS…FKKLRLNTLQ (308 aa)) form the PKS/mFAS DH domain. Residues 1336–1611 (ITGHIVGDVP…GMCFKKLRLN (276 aa)) are product template (PT) domain. The active-site Proton acceptor; for dehydratase activity is the histidine 1339. Residues 1464–1614 (AEVFTTRTAY…FKKLRLNTLQ (151 aa)) form a C-terminal hotdog fold region. The Proton donor; for dehydratase activity role is filled by aspartate 1525. Residues 1660-1735 (VDVQNTVLNI…ELVREISSTV (76 aa)) enclose the Carrier 1 domain. An O-(pantetheine 4'-phosphoryl)serine modification is found at serine 1694. Positions 1739–1761 (AATAVNTPETASTPEPTLQGDAS) are disordered. Residues 1845 to 1922 (SSPSSDLVDT…AVNQYISSKR (78 aa)) form the Carrier 2 domain. Serine 1882 bears the O-(pantetheine 4'-phosphoryl)serine mark. A disordered region spans residues 1920–1946 (SKRPGKSPKQVEETAMDPDREEDLSDL). The segment covering 1933 to 1944 (TAMDPDREEDLS) has biased composition (acidic residues). Positions 1963–2202 (VPMSVQKSSS…LGAVTQALVD (240 aa)) are thioesterase (TE) domain.

It functions in the pathway secondary metabolite biosynthesis. Its function is as follows. Non-reducing polyketide synthase, part of the gene cluster that mediates the biosynthesis of melleolides, a range of antifungal and phytotoxic polyketide derivatives composed of an orsellinic acid (OA) moiety esterified to various sesquiterpene alcohols. The first step in melleolides biosynthesis is performed by the delta(6)-protoilludene synthase PRO1 which catalyzes the cyclization of farnesyl diphosphate to protoilludene. The orsellinic acid synthase armB produces OA by condensing acetyl-CoA with 3 malonyl-CoA units in a three-round chain elongation reaction folowed by a C2-C7 ring closure. ArmB further catalyzes the trans-esterification of OA to the various sesquiterpene alcohols resulting from the hydroxylation of protoilludene. The melleolides cluster also includes 5 cytochrome P450 monooxygenases, 4 NAD(+)-dependent oxidoreductases, one flavin-dependent oxidoreductase, and one O-methyltransferase. The cytochrome P450 monooxygenases may be involved in protoilludene hydroxylation to elaborate melleolides with multiple alcohol groups, such as melleolide D, which carries alcohol functionalities at C-4, C-5, C-10, and C-13. The role of the NAD(+)-dependent enzymes remains unknown. Numerous melleolides, including arnamial, show 5'-O-methylation of the aromatic moiety which may be catalyzed by the methyltransferase encoded in the cluster. The flavin-dependent oxidoreductase might represent the dehydrogenase yielding the aldehyde in position 1 of arnamial and other melleolides. Finally, several halogenase localized outside of the cluster (armH1 to armH5), are able to catalyze the transfer of a single chlorine atom to the melleolide backbone, resulting in a 6'-chloromelleolide product. In Armillaria ostoyae (Armillaria root rot fungus), this protein is Orsellinic acid synthase ArmB.